The primary structure comprises 352 residues: Uroporphyrinogen decarboxylase (352 aa).

Substrate contacts are provided by residues 26–30 (RQAGR), Phe-45, Asp-76, Tyr-153, Ser-208, and His-323.

The protein belongs to the uroporphyrinogen decarboxylase family. As to quaternary structure, homodimer.

It is found in the cytoplasm. It carries out the reaction uroporphyrinogen III + 4 H(+) = coproporphyrinogen III + 4 CO2. It functions in the pathway porphyrin-containing compound metabolism; protoporphyrin-IX biosynthesis; coproporphyrinogen-III from 5-aminolevulinate: step 4/4. Its function is as follows. Catalyzes the decarboxylation of four acetate groups of uroporphyrinogen-III to yield coproporphyrinogen-III. The protein is Uroporphyrinogen decarboxylase of Prochlorococcus marinus (strain MIT 9313).